Consider the following 185-residue polypeptide: C-phycoerythrin beta chain (185 aa).

Cysteine 49 and cysteine 60 together coordinate (2R,3E)-phycoerythrobilin. Asparagine 71 carries the post-translational modification N4-methylasparagine. (2R,3E)-phycoerythrobilin contacts are provided by cysteine 81 and cysteine 166.

Belongs to the phycobiliprotein family. In terms of assembly, heterodimer of an alpha and a beta chain. Post-translationally, contains three covalently linked bilin chromophores.

Its subcellular location is the cellular thylakoid membrane. Functionally, light-harvesting photosynthetic bile pigment-protein from the phycobiliprotein complex. In Pseudanabaena tenuis (strain PCC 7409), this protein is C-phycoerythrin beta chain (cpeB).